Reading from the N-terminus, the 562-residue chain is Protein FAM222B (562 aa).

Composition is skewed to low complexity over residues 147–167 (PQAQ…LAHA) and 183–201 (ALSH…HPQQ). Disordered stretches follow at residues 147 to 242 (PQAQ…PPNV) and 537 to 562 (AHRA…PGYR).

The protein belongs to the FAM222 family.

The polypeptide is Protein FAM222B (Fam222b) (Mus musculus (Mouse)).